A 134-amino-acid chain; its full sequence is DNA-directed RNA polymerase subunit omega (134 aa).

Belongs to the RNA polymerase subunit omega family. The RNAP catalytic core consists of 2 alpha, 1 beta, 1 beta' and 1 omega subunit. When a sigma factor is associated with the core the holoenzyme is formed, which can initiate transcription.

It catalyses the reaction RNA(n) + a ribonucleoside 5'-triphosphate = RNA(n+1) + diphosphate. Functionally, promotes RNA polymerase assembly. Latches the N- and C-terminal regions of the beta' subunit thereby facilitating its interaction with the beta and alpha subunits. The protein is DNA-directed RNA polymerase subunit omega of Rhizobium etli (strain CIAT 652).